We begin with the raw amino-acid sequence, 37 residues long: M-oxotoxin-Ot2c (37 aa).

In terms of tissue distribution, expressed by the venom gland.

It is found in the secreted. In terms of biological role, disrupts biological membranes, particularly those rich in phosphocholine. Has antimicrobial activity against Gram-negative bacterium E.coli, Gram-positive bacteria B.subtilis and S.aureus, and hemolytic activity against sheep, pig and guinea pig red blood cells. Has insecticidal activity against S.frugiperda ovarian cells by opening non-selective ion channels. Enhances the insecticidal activity of spider venom neurotoxic peptides. This Oxyopes takobius (Lynx spider) protein is M-oxotoxin-Ot2c.